The chain runs to 421 residues: Tyrosine--tRNA ligase (421 aa).

An L-tyrosine-binding site is contributed by Y38. The 'HIGH' region signature appears at 43–52; it reads PTGDSLHIGH. Residues Y169 and Q173 each coordinate L-tyrosine. A 'KMSKS' region motif is present at residues 231–235; the sequence is KFGKS. K234 contributes to the ATP binding site. The S4 RNA-binding domain maps to 353–419; it reads KNLVDFLVDT…GKKKYTLVHI (67 aa).

It belongs to the class-I aminoacyl-tRNA synthetase family. TyrS type 1 subfamily. Homodimer.

It is found in the cytoplasm. It catalyses the reaction tRNA(Tyr) + L-tyrosine + ATP = L-tyrosyl-tRNA(Tyr) + AMP + diphosphate + H(+). Functionally, catalyzes the attachment of tyrosine to tRNA(Tyr) in a two-step reaction: tyrosine is first activated by ATP to form Tyr-AMP and then transferred to the acceptor end of tRNA(Tyr). This chain is Tyrosine--tRNA ligase, found in Lactobacillus delbrueckii subsp. bulgaricus (strain ATCC BAA-365 / Lb-18).